Here is a 615-residue protein sequence, read N- to C-terminus: Zinc finger protein 653 (615 aa).

Disordered stretches follow at residues 1-48 (MAER…ARRR), 95-117 (RSGR…KRRR), 176-236 (PLSD…SSGL), and 401-432 (EEKE…ELDG). The Nuclear localization signal motif lies at 107–118 (PKKPKRKKRRRR). Residues 108-117 (KKPKRKKRRR) are compositionally biased toward basic residues. A compositionally biased stretch (low complexity) spans 193-205 (AGSSDSSSSGSAS). Polar residues predominate over residues 226 to 236 (TPTSPVGSSGL). The span at 419–432 (AEPEAEADGEELDG) shows a compositional bias: acidic residues. Residues 445 to 451 (EPEKRRR) carry the Nuclear localization signal motif. C2H2-type zinc fingers lie at residues 467–492 (FHCP…NLVH), 498–522 (KVCP…MIIH), 528–550 (FTCE…RRTH), 556–578 (LQCE…MKKH), and 586–609 (FTCD…LKSH).

Belongs to the krueppel C2H2-type zinc-finger protein family. In terms of assembly, interacts with NR5A1. In terms of tissue distribution, highly expressed in testis, cerebellum, temporal lobe, hippocampus and the adrenal gland. Moderately expressed in spleen, uterus, thymus, pancreas, kidney, stomach and rectum.

The protein localises to the nucleus. Functionally, transcriptional repressor. May repress NR5A1, PPARG, NR1H3, NR4A2, ESR1 and NR3C1 transcriptional activity. This Homo sapiens (Human) protein is Zinc finger protein 653 (ZNF653).